A 361-amino-acid polypeptide reads, in one-letter code: Aromatic amino acid aminotransferase (361 aa).

At Lys215 the chain carries N6-(pyridoxal phosphate)lysine.

The protein belongs to the class-II pyridoxal-phosphate-dependent aminotransferase family. Homodimer. Requires pyridoxal 5'-phosphate as cofactor.

The catalysed reaction is an aromatic L-alpha-amino acid + 2-oxoglutarate = an aromatic oxo-acid + L-glutamate. Functionally, aminotransferase that catalyzes the conversion of aromatic amino acids and 2-oxoglutarate into corresponding aromatic oxo acids and L-glutamate. The chain is Aromatic amino acid aminotransferase from Mycolicibacterium smegmatis (strain ATCC 700084 / mc(2)155) (Mycobacterium smegmatis).